A 238-amino-acid chain; its full sequence is Pyridoxine 5'-phosphate synthase (238 aa).

3-amino-2-oxopropyl phosphate is bound at residue Asn-7. 9-10 (DH) provides a ligand contact to 1-deoxy-D-xylulose 5-phosphate. Arg-18 provides a ligand contact to 3-amino-2-oxopropyl phosphate. The active-site Proton acceptor is the His-43. 1-deoxy-D-xylulose 5-phosphate-binding residues include Arg-45 and His-50. Glu-70 (proton acceptor) is an active-site residue. 1-deoxy-D-xylulose 5-phosphate is bound at residue Thr-100. Catalysis depends on His-191, which acts as the Proton donor. 3-amino-2-oxopropyl phosphate is bound by residues Gly-192 and 213–214 (GH).

This sequence belongs to the PNP synthase family. Homooctamer; tetramer of dimers.

The protein localises to the cytoplasm. The catalysed reaction is 3-amino-2-oxopropyl phosphate + 1-deoxy-D-xylulose 5-phosphate = pyridoxine 5'-phosphate + phosphate + 2 H2O + H(+). It functions in the pathway cofactor biosynthesis; pyridoxine 5'-phosphate biosynthesis; pyridoxine 5'-phosphate from D-erythrose 4-phosphate: step 5/5. In terms of biological role, catalyzes the complicated ring closure reaction between the two acyclic compounds 1-deoxy-D-xylulose-5-phosphate (DXP) and 3-amino-2-oxopropyl phosphate (1-amino-acetone-3-phosphate or AAP) to form pyridoxine 5'-phosphate (PNP) and inorganic phosphate. The chain is Pyridoxine 5'-phosphate synthase from Syntrophobacter fumaroxidans (strain DSM 10017 / MPOB).